The chain runs to 237 residues: Ribose-5-phosphate isomerase A (237 aa).

Substrate is bound by residues 30–33 (SGST), 87–90 (DGAD), and 100–103 (KGGG). The Proton acceptor role is filled by Glu109. Lys127 is a binding site for substrate.

This sequence belongs to the ribose 5-phosphate isomerase family. In terms of assembly, homodimer.

The enzyme catalyses aldehydo-D-ribose 5-phosphate = D-ribulose 5-phosphate. The protein operates within carbohydrate degradation; pentose phosphate pathway; D-ribose 5-phosphate from D-ribulose 5-phosphate (non-oxidative stage): step 1/1. In terms of biological role, catalyzes the reversible conversion of ribose-5-phosphate to ribulose 5-phosphate. The protein is Ribose-5-phosphate isomerase A of Prochlorococcus marinus (strain MIT 9211).